Here is an 87-residue protein sequence, read N- to C-terminus: U3-theraphotoxin-Hhn1l (87 aa).

The N-terminal stretch at methionine 1–alanine 24 is a signal peptide. Positions serine 25–arginine 52 are excised as a propeptide. 3 disulfides stabilise this stretch: cysteine 54-cysteine 67, cysteine 61-cysteine 72, and cysteine 66-cysteine 79.

Belongs to the neurotoxin 10 (Hwtx-1) family. 51 (Hntx-8) subfamily. Hntx-8 sub-subfamily. Expressed by the venom gland.

The protein localises to the secreted. Its function is as follows. Ion channel inhibitor. The chain is U3-theraphotoxin-Hhn1l from Cyriopagopus hainanus (Chinese bird spider).